Consider the following 417-residue polypeptide: NADH-quinone oxidoreductase subunit D (417 aa).

It belongs to the complex I 49 kDa subunit family. NDH-1 is composed of 14 different subunits. Subunits NuoB, C, D, E, F, and G constitute the peripheral sector of the complex.

It localises to the cell inner membrane. It carries out the reaction a quinone + NADH + 5 H(+)(in) = a quinol + NAD(+) + 4 H(+)(out). Functionally, NDH-1 shuttles electrons from NADH, via FMN and iron-sulfur (Fe-S) centers, to quinones in the respiratory chain. The immediate electron acceptor for the enzyme in this species is believed to be ubiquinone. Couples the redox reaction to proton translocation (for every two electrons transferred, four hydrogen ions are translocated across the cytoplasmic membrane), and thus conserves the redox energy in a proton gradient. This Coxiella burnetii (strain RSA 331 / Henzerling II) protein is NADH-quinone oxidoreductase subunit D.